The chain runs to 160 residues: Eosinophil cationic protein (160 aa).

A signal peptide spans 1 to 27; sequence MVPKLFTSQICLLLLLGLMGVEGSLHA. The interval 28–72 is required for nearly all of the bactericidal activity; partially involved in LPS-binding and bacterial membrane depolarization; sequence RPPQFTRAQWFAIQHISLNPPRCTIAMRAINNYRWRCKNQNTFLR. Histidine 42 acts as the Proton acceptor in catalysis. Intrachain disulfides connect cysteine 50-cysteine 110, cysteine 64-cysteine 123, cysteine 82-cysteine 138, and cysteine 89-cysteine 98. Tyrosine 60 is subject to 3'-nitrotyrosine. Position 65 to 69 (65 to 69) interacts with substrate; sequence KNQNT. Asparagine 84, asparagine 92, and asparagine 119 each carry an N-linked (GlcNAc...) asparagine glycan. The active-site Proton donor is histidine 155.

This sequence belongs to the pancreatic ribonuclease family. As to quaternary structure, interacts with bacterial lipopolysaccharide (LPS) and lipoteichoic acid (LTA). In vitro interacts with and insert into lipid bilayers composed of dioleoyl phosphatidylcholine and dioleoyl phosphatidylglycerol. In vitro, tends to form amyloid-like aggregates at pH 3, but not at pH 5, nor 7.

Its subcellular location is the secreted. Its function is as follows. Cytotoxin and helminthotoxin with low-efficiency ribonuclease activity. Possesses a wide variety of biological activities. Exhibits antibacterial activity, including cytoplasmic membrane depolarization of preferentially Gram-negative, but also Gram-positive strains. Promotes E.coli outer membrane detachment, alteration of the overall cell shape and partial loss of cell content. This chain is Eosinophil cationic protein (RNASE3), found in Homo sapiens (Human).